Consider the following 460-residue polypeptide: GTPase Der (460 aa).

2 EngA-type G domains span residues Pro4–Glu174 and Pro184–Ser361. GTP contacts are provided by residues Gly10–Ser17, Asp57–Leu61, Asn126–Glu129, Gly190–Ser197, Asp237–Ile241, and Asn302–Asp305. The region spanning Arg362–Glu446 is the KH-like domain.

Belongs to the TRAFAC class TrmE-Era-EngA-EngB-Septin-like GTPase superfamily. EngA (Der) GTPase family. Associates with the 50S ribosomal subunit.

GTPase that plays an essential role in the late steps of ribosome biogenesis. The chain is GTPase Der from Thermomicrobium roseum (strain ATCC 27502 / DSM 5159 / P-2).